The following is a 521-amino-acid chain: Probable protein kinase UbiB (521 aa).

Residues 119 to 497 (QFDETPIASA…QKRTNRLLQT (379 aa)) form the Protein kinase domain. Residues 125 to 133 (IASASIAQV) and Lys151 contribute to the ATP site. Asp286 (proton acceptor) is an active-site residue. Residues 496 to 516 (QTIIYGGIGFVLGLLAMQLLV) form a helical membrane-spanning segment.

The protein belongs to the ABC1 family. UbiB subfamily.

Its subcellular location is the cell inner membrane. It functions in the pathway cofactor biosynthesis; ubiquinone biosynthesis [regulation]. Its function is as follows. Is probably a protein kinase regulator of UbiI activity which is involved in aerobic coenzyme Q (ubiquinone) biosynthesis. The polypeptide is Probable protein kinase UbiB (Variovorax paradoxus (strain S110)).